A 179-amino-acid chain; its full sequence is Large ribosomal subunit protein uL6 (179 aa).

This sequence belongs to the universal ribosomal protein uL6 family. In terms of assembly, part of the 50S ribosomal subunit.

Its function is as follows. This protein binds to the 23S rRNA, and is important in its secondary structure. It is located near the subunit interface in the base of the L7/L12 stalk, and near the tRNA binding site of the peptidyltransferase center. The protein is Large ribosomal subunit protein uL6 of Gemmatimonas aurantiaca (strain DSM 14586 / JCM 11422 / NBRC 100505 / T-27).